The chain runs to 325 residues: Thiamine-monophosphate kinase (325 aa).

Residues aspartate 30, serine 45, threonine 46, and aspartate 47 each contribute to the Mg(2+) site. Histidine 54 is a substrate binding site. Aspartate 75 and aspartate 122 together coordinate Mg(2+). Residues 121–122 (GD) and arginine 146 each bind ATP. Aspartate 212 is a Mg(2+) binding site. Serine 214 is a binding site for ATP. Residue aspartate 215 participates in Mg(2+) binding. Glutamate 263 and tyrosine 319 together coordinate substrate.

It belongs to the thiamine-monophosphate kinase family.

It carries out the reaction thiamine phosphate + ATP = thiamine diphosphate + ADP. The protein operates within cofactor biosynthesis; thiamine diphosphate biosynthesis; thiamine diphosphate from thiamine phosphate: step 1/1. In terms of biological role, catalyzes the ATP-dependent phosphorylation of thiamine-monophosphate (TMP) to form thiamine-pyrophosphate (TPP), the active form of vitamin B1. The chain is Thiamine-monophosphate kinase from Escherichia coli O157:H7.